Here is a 165-residue protein sequence, read N- to C-terminus: Small ribosomal subunit protein uS5 (165 aa).

The S5 DRBM domain occupies 10–73; that stretch reads LVEKLVAVDR…EAARRNMITV (64 aa).

It belongs to the universal ribosomal protein uS5 family. In terms of assembly, part of the 30S ribosomal subunit. Contacts proteins S4 and S8.

Functionally, with S4 and S12 plays an important role in translational accuracy. Its function is as follows. Located at the back of the 30S subunit body where it stabilizes the conformation of the head with respect to the body. This Acinetobacter baumannii (strain AB307-0294) protein is Small ribosomal subunit protein uS5.